A 393-amino-acid chain; its full sequence is Staphopain B (393 aa).

The N-terminal stretch at 1–36 is a signal peptide; that stretch reads MNSSYKSRVFNIISIIMVSMLILSLGAFANNNKAKA. The propeptide occupies 37–219; the sequence is DSHSKQLEIN…KVEENEAIQE (183 aa). Active-site residues include Cys-243, His-340, and Asn-360.

This sequence belongs to the peptidase C47 family. In terms of assembly, in the cytoplasm, prematurely activated/folded SspB forms a stable non-covalent complex with SspC. Post-translationally, proteolytically cleaved by staphylococcal serine protease (SspA).

The protein resides in the secreted. Prematurely activated/folded staphopain B is inhibited by staphostatin B (SspC), which is probably required to protect staphylococcal cytoplasmic proteins from degradation by SspB. In terms of biological role, cysteine protease that plays an important role in the inhibition of host innate immune response. Degrades host elastin, fibrogen, fibronectin and kininogen. Blocks phagocytosis of opsonised S.aureus by neutrophils and monocytes by inducing their death in a proteolytic activity-dependent manner. Decreases surface expression of the 'don't eat me' signal CD31 on neutrophils. Cleaves host galectin-3/LGALS3, thereby inhibiting the neutrophil-activating ability of the lectin. In Staphylococcus aureus (strain MSSA476), this protein is Staphopain B (sspB).